The sequence spans 114 residues: T cell receptor beta variable 6-4 (114 aa).

The signal sequence occupies residues 1-21 (MSIRLLCCVAFSLLWAGPVTA). Residues 22-114 (GITQAPTSQI…TSVYFCASSD (93 aa)) enclose the Ig-like domain. Cys42 and Cys110 are oxidised to a cystine.

Alpha-beta TR is a heterodimer composed of an alpha and beta chain; disulfide-linked. The alpha-beta TR is associated with the transmembrane signaling CD3 coreceptor proteins to form the TR-CD3 (TcR or TCR). The assembly of alpha-beta TR heterodimers with CD3 occurs in the endoplasmic reticulum where a single alpha-beta TR heterodimer associates with one CD3D-CD3E heterodimer, one CD3G-CD3E heterodimer and one CD247 homodimer forming a stable octameric structure. CD3D-CD3E and CD3G-CD3E heterodimers preferentially associate with TR alpha and TR beta chains, respectively. The association of the CD247 homodimer is the last step of TcR assembly in the endoplasmic reticulum and is required for transport to the cell surface.

It localises to the cell membrane. Its function is as follows. V region of the variable domain of T cell receptor (TR) beta chain that participates in the antigen recognition. Alpha-beta T cell receptors are antigen specific receptors which are essential to the immune response and are present on the cell surface of T lymphocytes. Recognize peptide-major histocompatibility (MH) (pMH) complexes that are displayed by antigen presenting cells (APC), a prerequisite for efficient T cell adaptive immunity against pathogens. Binding of alpha-beta TR to pMH complex initiates TR-CD3 clustering on the cell surface and intracellular activation of LCK that phosphorylates the ITAM motifs of CD3G, CD3D, CD3E and CD247 enabling the recruitment of ZAP70. In turn ZAP70 phosphorylates LAT, which recruits numerous signaling molecules to form the LAT signalosome. The LAT signalosome propagates signal branching to three major signaling pathways, the calcium, the mitogen-activated protein kinase (MAPK) kinase and the nuclear factor NF-kappa-B (NF-kB) pathways, leading to the mobilization of transcription factors that are critical for gene expression and essential for T cell growth and differentiation. The T cell repertoire is generated in the thymus, by V-(D)-J rearrangement. This repertoire is then shaped by intrathymic selection events to generate a peripheral T cell pool of self-MH restricted, non-autoaggressive T cells. Post-thymic interaction of alpha-beta TR with the pMH complexes shapes TR structural and functional avidity. The polypeptide is T cell receptor beta variable 6-4 (Homo sapiens (Human)).